The chain runs to 86 residues: Large ribosomal subunit protein bL31B (86 aa).

It belongs to the bacterial ribosomal protein bL31 family. Type B subfamily. As to quaternary structure, part of the 50S ribosomal subunit.

This chain is Large ribosomal subunit protein bL31B, found in Streptococcus equi subsp. zooepidemicus (strain H70).